A 395-amino-acid chain; its full sequence is Probable L-tyrosine/L-aspartate decarboxylase (395 aa).

The residue at position 242 (K242) is an N6-(pyridoxal phosphate)lysine.

It belongs to the group II decarboxylase family. MfnA subfamily. Requires pyridoxal 5'-phosphate as cofactor.

It carries out the reaction L-tyrosine + H(+) = tyramine + CO2. The catalysed reaction is L-aspartate + H(+) = beta-alanine + CO2. The protein operates within cofactor biosynthesis; methanofuran biosynthesis. It functions in the pathway cofactor biosynthesis; coenzyme A biosynthesis. Catalyzes the decarboxylation of L-tyrosine to produce tyramine for methanofuran biosynthesis. Can also catalyze the decarboxylation of L-aspartate to produce beta-alanine for coenzyme A (CoA) biosynthesis. The sequence is that of Probable L-tyrosine/L-aspartate decarboxylase from Methanosarcina acetivorans (strain ATCC 35395 / DSM 2834 / JCM 12185 / C2A).